The chain runs to 205 residues: Outer-membrane lipoprotein carrier protein (205 aa).

A signal peptide spans 1–21 (MRFLAVATMVVALMVPWSVRA).

Belongs to the LolA family. Monomer.

The protein resides in the periplasm. Functionally, participates in the translocation of lipoproteins from the inner membrane to the outer membrane. Only forms a complex with a lipoprotein if the residue after the N-terminal Cys is not an aspartate (The Asp acts as a targeting signal to indicate that the lipoprotein should stay in the inner membrane). This is Outer-membrane lipoprotein carrier protein from Methylobacillus flagellatus (strain ATCC 51484 / DSM 6875 / VKM B-1610 / KT).